The sequence spans 651 residues: Protein RcaC (651 aa).

One can recognise a Response regulatory 1 domain in the interval Lys2 to Leu116. At Asp51 the chain carries 4-aspartylphosphate. Residues Phe124 to Ala223 constitute a DNA-binding region (ompR/PhoB-type). Response regulatory domains lie at Leu384–Leu519 and Lys527–Leu643.

In terms of biological role, required for chromatic adaptation. Thought to be a positive regulator of phycobiliproteins. This chain is Protein RcaC (rcaC), found in Microchaete diplosiphon (Fremyella diplosiphon).